The following is a 337-amino-acid chain: Mitochondrial glutathione transporter SLC25A40 (337 aa).

Solcar repeat units follow at residues valine 14–phenylalanine 132, asparagine 140–tryptophan 224, and proline 234–phenylalanine 328. The next 6 membrane-spanning stretches (helical) occupy residues methionine 20–valine 40, leucine 104–threonine 124, isoleucine 146–isoleucine 166, tryptophan 200–leucine 221, phenylalanine 240–valine 260, and glycine 299–isoleucine 319.

This sequence belongs to the mitochondrial carrier (TC 2.A.29) family.

It is found in the mitochondrion inner membrane. It catalyses the reaction glutathione(in) = glutathione(out). Probable mitochondrial transporter required for glutathione import into mitochondria. Glutathione, which plays key roles in oxidative metabolism, is produced exclusively in the cytosol and is imported in many organelles. Mitochondrial glutathione is required for the activity and stability of proteins containing iron-sulfur clusters, as well as erythropoiesis. The sequence is that of Mitochondrial glutathione transporter SLC25A40 from Mus musculus (Mouse).